The chain runs to 448 residues: N-succinylarginine dihydrolase (448 aa).

Residues 19-28 (GGLSYGNVAS), asparagine 110, and 137-138 (HR) contribute to the substrate site. Glutamate 174 is a catalytic residue. Arginine 214 is a binding site for substrate. Histidine 250 is a catalytic residue. Residues aspartate 252 and asparagine 365 each coordinate substrate. The active-site Nucleophile is the cysteine 371.

This sequence belongs to the succinylarginine dihydrolase family. Homodimer.

The catalysed reaction is N(2)-succinyl-L-arginine + 2 H2O + 2 H(+) = N(2)-succinyl-L-ornithine + 2 NH4(+) + CO2. The protein operates within amino-acid degradation; L-arginine degradation via AST pathway; L-glutamate and succinate from L-arginine: step 2/5. Its function is as follows. Catalyzes the hydrolysis of N(2)-succinylarginine into N(2)-succinylornithine, ammonia and CO(2). This Pseudomonas syringae pv. syringae (strain B728a) protein is N-succinylarginine dihydrolase.